The primary structure comprises 426 residues: Adenylosuccinate synthetase (426 aa).

Residues 11-17 and 39-41 each bind GTP; these read GDEGKGK and GHT. Asp12 acts as the Proton acceptor in catalysis. The Mg(2+) site is built by Asp12 and Gly39. IMP is bound by residues 12 to 15, 37 to 40, Thr130, Arg144, Asn226, Thr241, and Arg305; these read DEGK and NAGH. His40 functions as the Proton donor in the catalytic mechanism. 301 to 307 is a substrate binding site; sequence VTTGRKR. GTP is bound by residues Arg307, 333–335, and 415–417; these read KLD and GTG.

This sequence belongs to the adenylosuccinate synthetase family. Homodimer. It depends on Mg(2+) as a cofactor.

It is found in the cytoplasm. It carries out the reaction IMP + L-aspartate + GTP = N(6)-(1,2-dicarboxyethyl)-AMP + GDP + phosphate + 2 H(+). It functions in the pathway purine metabolism; AMP biosynthesis via de novo pathway; AMP from IMP: step 1/2. In terms of biological role, plays an important role in the de novo pathway and in the salvage pathway of purine nucleotide biosynthesis. Catalyzes the first committed step in the biosynthesis of AMP from IMP. This Meyerozyma guilliermondii (strain ATCC 6260 / CBS 566 / DSM 6381 / JCM 1539 / NBRC 10279 / NRRL Y-324) (Yeast) protein is Adenylosuccinate synthetase.